The following is a 60-amino-acid chain: Single-pass membrane and coiled-coil domain-containing protein 4 homolog (60 aa).

The interval 1 to 21 (MRKLRGGQTKETRKQKQERRE) is disordered. The segment covering 8 to 21 (QTKETRKQKQERRE) has biased composition (basic and acidic residues). Residues 10–33 (KETRKQKQERREENLKIQQQLKTI) are a coiled coil. Residues 32–52 (TIVLPICGVFLMCIVVYVFLK) form a helical membrane-spanning segment.

This sequence belongs to the SMCO4 family.

It localises to the membrane. The polypeptide is Single-pass membrane and coiled-coil domain-containing protein 4 homolog (Aedes aegypti (Yellowfever mosquito)).